The following is a 385-amino-acid chain: 8-amino-7-oxononanoate synthase (385 aa).

Position 21 (arginine 21) interacts with substrate. 108–109 is a binding site for pyridoxal 5'-phosphate; the sequence is GF. Histidine 133 provides a ligand contact to substrate. Pyridoxal 5'-phosphate-binding residues include serine 179, histidine 207, and threonine 233. Residue lysine 236 is modified to N6-(pyridoxal phosphate)lysine. Threonine 352 provides a ligand contact to substrate.

The protein belongs to the class-II pyridoxal-phosphate-dependent aminotransferase family. BioF subfamily. Homodimer. It depends on pyridoxal 5'-phosphate as a cofactor.

It carries out the reaction 6-carboxyhexanoyl-[ACP] + L-alanine + H(+) = (8S)-8-amino-7-oxononanoate + holo-[ACP] + CO2. It participates in cofactor biosynthesis; biotin biosynthesis. Functionally, catalyzes the decarboxylative condensation of pimeloyl-[acyl-carrier protein] and L-alanine to produce 8-amino-7-oxononanoate (AON), [acyl-carrier protein], and carbon dioxide. This is 8-amino-7-oxononanoate synthase from Klebsiella pneumoniae (strain 342).